The sequence spans 207 residues: Small ribosomal subunit protein uS4 (207 aa).

The tract at residues 31-55 is disordered; the sequence is KCKLDSKPGQHGRTSGARTSDYGTQ. A compositionally biased stretch (polar residues) spans 42 to 53; sequence GRTSGARTSDYG. In terms of domain architecture, S4 RNA-binding spans 97-160; it reads SRLDNVVYRM…KKQARIIEAL (64 aa).

The protein belongs to the universal ribosomal protein uS4 family. Part of the 30S ribosomal subunit. Contacts protein S5. The interaction surface between S4 and S5 is involved in control of translational fidelity.

Functionally, one of the primary rRNA binding proteins, it binds directly to 16S rRNA where it nucleates assembly of the body of the 30S subunit. Its function is as follows. With S5 and S12 plays an important role in translational accuracy. The polypeptide is Small ribosomal subunit protein uS4 (Burkholderia multivorans (strain ATCC 17616 / 249)).